A 479-amino-acid chain; its full sequence is MNFETIIGLEVHVELNTNSKIFSPSSAHFGEDPNANTNVIDWSFPGVLPVMNKGVIDAGIKAALALNMDIHKEMHFDRKNYFYPDNPKAYQISQFDEPIGYNGWIKIKLEDGSTKKIRIERAHLEEDAGKNTHGTDGYSYVDLNRQGVPLIEIVSEADMRSPEEAYAYLTALKEIIQYTGISDVKMEEGSMRVDANISLRPYGQEQFGTKTELKNLNSFSNVRKGLEFEVERQAKLLRSGGVIRQETRRYDEANKGTILMRVKEGAADYRYFPEPDLPLYEIDDAWIDEMRAQLPQFPAQRRAKYEEELGLSAYDASQLTATKVLSDYFETAVSLGGDAKQVSNWLQGEVAQFLNAEGKTIEEIALTPENLVEMIAIIADGTISSKMAKKVFVHLAKNGGSARAYVEKAGLVQISDPAVLVPIIHQVFADNEAAVADFKSGKRNADKAFTGFLMKATKGQANPQVAQQLLAQELQKLRD.

It belongs to the GatB/GatE family. GatB subfamily. Heterotrimer of A, B and C subunits.

It catalyses the reaction L-glutamyl-tRNA(Gln) + L-glutamine + ATP + H2O = L-glutaminyl-tRNA(Gln) + L-glutamate + ADP + phosphate + H(+). The catalysed reaction is L-aspartyl-tRNA(Asn) + L-glutamine + ATP + H2O = L-asparaginyl-tRNA(Asn) + L-glutamate + ADP + phosphate + 2 H(+). Functionally, allows the formation of correctly charged Asn-tRNA(Asn) or Gln-tRNA(Gln) through the transamidation of misacylated Asp-tRNA(Asn) or Glu-tRNA(Gln) in organisms which lack either or both of asparaginyl-tRNA or glutaminyl-tRNA synthetases. The reaction takes place in the presence of glutamine and ATP through an activated phospho-Asp-tRNA(Asn) or phospho-Glu-tRNA(Gln). This Streptococcus pyogenes serotype M12 (strain MGAS2096) protein is Aspartyl/glutamyl-tRNA(Asn/Gln) amidotransferase subunit B.